The following is a 364-amino-acid chain: Popeye domain-containing protein 2 (364 aa).

The N-linked (GlcNAc...) asparagine glycan is linked to asparagine 4. The next 2 helical transmembrane spans lie at 37-57 and 77-97; these read LLLGFMGGSGVYGCFYLFGFL and IVLWSFLLAVVCLLQLAHLVY. Residues 276–333 are disordered; the sequence is ADAGPESEKGDEEVCEPAVSPPQATPTSLQQTPPCSTPPATTNFPAPPTRARLSRPDS. The segment covering 300 to 309 has biased composition (polar residues); that stretch reads TPTSLQQTPP. Threonine 361 bears the Phosphothreonine mark.

This sequence belongs to the popeye family. In terms of tissue distribution, expressed predominantly in the heart and in the skeletal muscle.

It localises to the membrane. The protein resides in the cell membrane. The protein localises to the sarcolemma. Important for the maintenance of cardiac function. Plays a regulatory function in heart rate dynamics mediated, at least in part, through cAMP-binding and, probably, by increasing cell surface expression of the potassium channel KCNK2 and enhancing current density. The chain is Popeye domain-containing protein 2 (POPDC2) from Homo sapiens (Human).